We begin with the raw amino-acid sequence, 325 residues long: NADH-quinone oxidoreductase subunit H (325 aa).

Transmembrane regions (helical) follow at residues 11-31 (ILLSILKAVVILLVVVTCGAF), 81-101 (VIFTLAPMIAFTSLLLAFAIV), 114-134 (IGILFFLMMAGLAVYAVLFAG), 154-174 (LSYEVFLGLSLMGVVAQAGSF), 186-206 (IWNVIPQFFGFVTFAIAGVAV), 237-257 (FFVGEYIGIVTISALMVTLFF), 265-285 (LPPFIWFALKTAFFMMMFILI), and 304-324 (VCLPLTLVNLLVTAAVILWQA).

This sequence belongs to the complex I subunit 1 family. As to quaternary structure, NDH-1 is composed of 13 different subunits. Subunits NuoA, H, J, K, L, M, N constitute the membrane sector of the complex.

The protein resides in the cell inner membrane. It carries out the reaction a quinone + NADH + 5 H(+)(in) = a quinol + NAD(+) + 4 H(+)(out). In terms of biological role, NDH-1 shuttles electrons from NADH, via FMN and iron-sulfur (Fe-S) centers, to quinones in the respiratory chain. The immediate electron acceptor for the enzyme in this species is believed to be ubiquinone. Couples the redox reaction to proton translocation (for every two electrons transferred, four hydrogen ions are translocated across the cytoplasmic membrane), and thus conserves the redox energy in a proton gradient. This subunit may bind ubiquinone. The protein is NADH-quinone oxidoreductase subunit H of Enterobacter sp. (strain 638).